We begin with the raw amino-acid sequence, 490 residues long: Glutamyl-tRNA(Gln) amidotransferase subunit A (490 aa).

Catalysis depends on charge relay system residues Lys-76 and Ser-151. Ser-175 (acyl-ester intermediate) is an active-site residue.

It belongs to the amidase family. GatA subfamily. As to quaternary structure, heterotrimer of A, B and C subunits.

The catalysed reaction is L-glutamyl-tRNA(Gln) + L-glutamine + ATP + H2O = L-glutaminyl-tRNA(Gln) + L-glutamate + ADP + phosphate + H(+). Allows the formation of correctly charged Gln-tRNA(Gln) through the transamidation of misacylated Glu-tRNA(Gln) in organisms which lack glutaminyl-tRNA synthetase. The reaction takes place in the presence of glutamine and ATP through an activated gamma-phospho-Glu-tRNA(Gln). This Methylobacillus flagellatus (strain ATCC 51484 / DSM 6875 / VKM B-1610 / KT) protein is Glutamyl-tRNA(Gln) amidotransferase subunit A.